The primary structure comprises 163 residues: MRIGYGYDVHGLVPGRKLVLGGVTIPYDRGLAGHSDADVLLHALADALLGAAALGDIGHYFPPGDPRYKDADSMLLLREVYRHVQTAGYRLANADATITAQEPRLAPYIDAMRERIAAALGVTKEQISVKATTTEGLGFTGRGEGISAQAVVLLLDREAGAGL.

Residues aspartate 8 and histidine 10 each coordinate a divalent metal cation. 4-CDP-2-C-methyl-D-erythritol 2-phosphate-binding positions include 8 to 10 (DVH) and 34 to 35 (HS). Residue histidine 42 participates in a divalent metal cation binding. 4-CDP-2-C-methyl-D-erythritol 2-phosphate is bound by residues 56–58 (DIG), 132–135 (TTTE), phenylalanine 139, and arginine 142.

Belongs to the IspF family. In terms of assembly, homotrimer. It depends on a divalent metal cation as a cofactor.

The catalysed reaction is 4-CDP-2-C-methyl-D-erythritol 2-phosphate = 2-C-methyl-D-erythritol 2,4-cyclic diphosphate + CMP. It participates in isoprenoid biosynthesis; isopentenyl diphosphate biosynthesis via DXP pathway; isopentenyl diphosphate from 1-deoxy-D-xylulose 5-phosphate: step 4/6. Functionally, involved in the biosynthesis of isopentenyl diphosphate (IPP) and dimethylallyl diphosphate (DMAPP), two major building blocks of isoprenoid compounds. Catalyzes the conversion of 4-diphosphocytidyl-2-C-methyl-D-erythritol 2-phosphate (CDP-ME2P) to 2-C-methyl-D-erythritol 2,4-cyclodiphosphate (ME-CPP) with a corresponding release of cytidine 5-monophosphate (CMP). The polypeptide is 2-C-methyl-D-erythritol 2,4-cyclodiphosphate synthase (Moorella thermoacetica (strain ATCC 39073 / JCM 9320)).